A 231-amino-acid chain; its full sequence is ATP phosphoribosyltransferase (231 aa).

Belongs to the ATP phosphoribosyltransferase family. Short subfamily. In terms of assembly, heteromultimer composed of HisG and HisZ subunits.

It is found in the cytoplasm. The enzyme catalyses 1-(5-phospho-beta-D-ribosyl)-ATP + diphosphate = 5-phospho-alpha-D-ribose 1-diphosphate + ATP. It participates in amino-acid biosynthesis; L-histidine biosynthesis; L-histidine from 5-phospho-alpha-D-ribose 1-diphosphate: step 1/9. Functionally, catalyzes the condensation of ATP and 5-phosphoribose 1-diphosphate to form N'-(5'-phosphoribosyl)-ATP (PR-ATP). Has a crucial role in the pathway because the rate of histidine biosynthesis seems to be controlled primarily by regulation of HisG enzymatic activity. The polypeptide is ATP phosphoribosyltransferase (hisG) (Rhizobium etli (strain CIAT 652)).